The chain runs to 60 residues: Potassium channel toxin alpha-KTx 3.16 (60 aa).

The first 23 residues, 1 to 23 (MKVFSAVLIILFVCSMIIGISEG), serve as a signal peptide directing secretion. Cystine bridges form between Cys30–Cys50, Cys36–Cys55, and Cys40–Cys57.

The protein belongs to the short scorpion toxin superfamily. Potassium channel inhibitor family. Alpha-KTx 03 subfamily. As to expression, expressed by the venom gland.

It localises to the secreted. Its function is as follows. Potassium channel inhibitor. The protein is Potassium channel toxin alpha-KTx 3.16 of Mesobuthus gibbosus (Mediterranean checkered scorpion).